The sequence spans 901 residues: Protein translocase subunit SecA (901 aa).

Residues Q87, 105-109 (GEGKT), and D512 each bind ATP. Zn(2+) contacts are provided by C885, C887, C896, and H897.

It belongs to the SecA family. As to quaternary structure, monomer and homodimer. Part of the essential Sec protein translocation apparatus which comprises SecA, SecYEG and auxiliary proteins SecDF-YajC and YidC. Zn(2+) serves as cofactor.

It is found in the cell inner membrane. The protein localises to the cytoplasm. The enzyme catalyses ATP + H2O + cellular proteinSide 1 = ADP + phosphate + cellular proteinSide 2.. Functionally, part of the Sec protein translocase complex. Interacts with the SecYEG preprotein conducting channel. Has a central role in coupling the hydrolysis of ATP to the transfer of proteins into and across the cell membrane, serving both as a receptor for the preprotein-SecB complex and as an ATP-driven molecular motor driving the stepwise translocation of polypeptide chains across the membrane. The protein is Protein translocase subunit SecA of Salmonella enteritidis PT4 (strain P125109).